A 78-amino-acid polypeptide reads, in one-letter code: UPF0154 protein lp_2061 (78 aa).

A helical membrane pass occupies residues 5-27; it reads TGIWILIVVIGVLVGLTGGFFGA.

The protein belongs to the UPF0154 family.

It is found in the membrane. The sequence is that of UPF0154 protein lp_2061 from Lactiplantibacillus plantarum (strain ATCC BAA-793 / NCIMB 8826 / WCFS1) (Lactobacillus plantarum).